The following is a 278-amino-acid chain: Undecaprenyl-diphosphatase 2 (278 aa).

A run of 7 helical transmembrane segments spans residues Met-1–Ile-21, Phe-38–Tyr-58, Phe-85–Leu-105, Phe-118–Val-138, Ser-191–Leu-211, Pro-223–Ile-243, and Leu-251–His-271.

It belongs to the UppP family.

It localises to the cell membrane. It catalyses the reaction di-trans,octa-cis-undecaprenyl diphosphate + H2O = di-trans,octa-cis-undecaprenyl phosphate + phosphate + H(+). Its function is as follows. Catalyzes the dephosphorylation of undecaprenyl diphosphate (UPP). Confers resistance to bacitracin. This Halalkalibacterium halodurans (strain ATCC BAA-125 / DSM 18197 / FERM 7344 / JCM 9153 / C-125) (Bacillus halodurans) protein is Undecaprenyl-diphosphatase 2.